The following is a 667-amino-acid chain: Chaperone protein DnaK (667 aa).

A Phosphothreonine; by autocatalysis modification is found at T196. Disordered regions lie at residues 495-525 and 595-667; these read EANSGLSDEEIEKMKEEAEQHAEEDERRKER and AGEE…GDDE. Basic and acidic residues predominate over residues 506 to 525; sequence EKMKEEAEQHAEEDERRKER. Low complexity predominate over residues 595 to 612; it reads AGEEIREAQQQQAQQGAA. Over residues 630–641 the composition is skewed to gly residues; that stretch reads GPAGGPTGGPAS. Residues 647–667 are compositionally biased toward acidic residues; that stretch reads DSDEEDVQDADYEVVDEGDDE.

It belongs to the heat shock protein 70 family.

Acts as a chaperone. This Salinibacter ruber (strain DSM 13855 / M31) protein is Chaperone protein DnaK.